The chain runs to 273 residues: MKDMKMQSSPETMMTRIPTPDPHSTGVREDAMDSVCKPWKLYENPYYCSSQSQQHQHQRKAFIWDLNFIKVFMESELGKAQDEIKELKAELDYERKARRRAELMIKKLAKDVEEERMAREAEEMQNKRLFKELSSEKSEMVRMKRDLEEERQMHRLAEVLREERVQMKLMDARLFLEEKLSELEEANRQGERERNRMMKPKILERACSSPARRRCENPQIKRGINPFPRVMRAIRSKSEKWGSKLECQKVQLKILLRQKTTPRCTPLLSSPPP.

Over residues Met-1 to Thr-12 the composition is skewed to polar residues. Positions Met-1–Asp-30 are disordered. The stretch at Ile-69–Lys-199 forms a coiled coil.

Interacts with STI.

Functionally, acts as a key regulator of trichome branching. Could participate with STI in the same pathway. Also plays a role in integrating endoreplication levels with cell shape. In Arabidopsis thaliana (Mouse-ear cress), this protein is Protein BRANCHLESS TRICHOME (BLT).